The sequence spans 567 residues: Structural protein ORF567 (567 aa).

A disordered region spans residues 7 to 393; it reads INALLGFPEE…MPIEHKPEQQ (387 aa). Pro residues predominate over residues 65 to 79; it reads TPTPIRPAPPPPPPI. Over residues 180–200 the composition is skewed to basic and acidic residues; sequence PKREPEHHTHGSTNNEHESKR. Residues 219–231 are compositionally biased toward low complexity; that stretch reads THQTSPSHSSGGT. 2 stretches are compositionally biased toward pro residues: residues 253–278 and 285–299; these read MPIP…PTPP and TPTP…PPPT. Low complexity predominate over residues 300 to 312; that stretch reads HGSSSTNSSGSTN. Residues 319 to 335 show a composition bias toward pro residues; it reads PKPIPIPPTPPPPPPHH. The span at 343-353 shows a compositional bias: basic and acidic residues; sequence PKHESEHHDHG. Residues 354–372 show a composition bias toward low complexity; sequence SSSTNSSSSTSNSSSGGTN.

It is found in the virion. The chain is Structural protein ORF567 from Acidianus two-tailed virus (ATV).